A 340-amino-acid chain; its full sequence is Melanin-concentrating hormone receptor 2 (340 aa).

Residues 1–34 (MNPFHSSCWNTSAELSNKSWNKEFAYQTASAVDT) are Extracellular-facing. N-linked (GlcNAc...) asparagine glycans are attached at residues asparagine 10 and asparagine 17. Residues 35–57 (VILPSMIGIICSTGLVGNILIVF) traverse the membrane as a helical segment. At 58–69 (TIIRSRKKTVPD) the chain is on the cytoplasmic side. A helical transmembrane segment spans residues 70–92 (IYICNLAVADLVHIIGMPFLIHQ). Over 93–106 (WARGGEWVFGGPLC) the chain is Extracellular. Residues 107 to 129 (TIITSLDTCNQFACSAIMTVMSV) traverse the membrane as a helical segment. The Cytoplasmic segment spans residues 130–149 (DRYFALVQPFRLTSWRTRYK). A helical membrane pass occupies residues 150–172 (TIRINLGLWAASFILALPVWIYS). Residues 173–198 (KVIKFKDGVESCAFDLTSPDDVLWYT) lie on the Extracellular side of the membrane. Residues 199–221 (LYLTITTFFFPLPLILVCYILIL) form a helical membrane-spanning segment. Topologically, residues 222-252 (CYTWEMYQQNKDARCCNPSVPKQRVMKLTKM) are cytoplasmic. Residues 253–272 (VLVLVAVFILSAAPYHVIQL) form a helical membrane-spanning segment. Residues 273–286 (VNLQMEQPTLAFYV) are Extracellular-facing. A helical membrane pass occupies residues 287–309 (GYYLSICLSYASSSINPFLYILL). Residues 310–340 (SGNFQKRLPQIQRRVTDKEIKNMGNTLKSHF) are Cytoplasmic-facing.

This sequence belongs to the G-protein coupled receptor 1 family.

The protein localises to the cell membrane. Its function is as follows. Receptor for melanin-concentrating hormone, coupled to G proteins that activate phosphoinositide hydrolysis. The protein is Melanin-concentrating hormone receptor 2 (MCHR2) of Macaca fascicularis (Crab-eating macaque).